The chain runs to 627 residues: MTELLFNKRLQVLVKSKDTDERRSVIRVSIELQLPSSPVHRKDLVVRLTDDTDLYFLYNLIISEEDFQSLKVQQGLLIDFTSFPQKFIDLLEQCICEQDKESPRFLLQLSSSSSAFDHSPSNLNIVETNAFKHLTHLSLKLLPGSDTDIKKYLASCLSSVKEEKQQLQQKLRKTEEDLTRQLNYAQQTLSEKSRELDKLRSEWTSQTTSLSSRHMQDLTAEREKALETQSRLQQQNEQLRQELESSHHRSTQQLQTKVSELETANRELIDKKYKSDSTIRDLKAKLTSLEEECQRSKQQVLSLRRENSALDSECHEKERLLNQLQTRVAVLEQEIKDKDQLVLRTKEVLEATQQQKNSVEGNAESKQLQISKLESTVKSLSEELIKANGIIKKLQADLKALLGKIKVKNSVTVPQEKILQETSDKLQRQQRELQDTQQRLSLKEEEAAKLKEQLEATVQKLDESREVLKTNENVITWLNKQLNENQLSRKQETVAMFETPAAALRSAAVPHNMAFPITSTINSKYPLALSCVSSGSRSVLTSSNGPKVQFNPMSVKPSAAEVSPAAFSQPANKENSEPVGLDSKYFERRDDSIPLRGLLPSMHLNREVPKPLNTAAAKATPSAFFPG.

The 53-residue stretch at 39–91 (VHRKDLVVRLTDDTDLYFLYNLIISEEDFQSLKVQQGLLIDFTSFPQKFIDLL) folds into the PISA domain. Residues 153-473 (LASCLSSVKE…SREVLKTNEN (321 aa)) are a coiled coil. 2 disordered regions span residues 187-257 (QTLS…LQTK) and 561-586 (EVSPAAFSQPANKENSEPVGLDSKYF). The segment covering 191 to 201 (EKSRELDKLRS) has biased composition (basic and acidic residues). The span at 202–213 (EWTSQTTSLSSR) shows a compositional bias: polar residues. Over residues 214–226 (HMQDLTAEREKAL) the composition is skewed to basic and acidic residues. Low complexity predominate over residues 229-238 (QSRLQQQNEQ).

In terms of assembly, nine homodimers form a cartwheel structure with an internal diameter of 23 nM and radial spokes connecting to the microtubule triplets.

It localises to the cytoplasm. The protein localises to the cytoskeleton. Its subcellular location is the microtubule organizing center. It is found in the centrosome. Central scaffolding component of the centrioles ensuring their 9-fold symmetry. Required for centrosome biogenesis and duplication: required both for mother-centriole-dependent centriole duplication and deuterosome-dependent centriole amplification in multiciliated cells. In Danio rerio (Zebrafish), this protein is Spindle assembly abnormal protein 6 homolog (sass6).